A 208-amino-acid polypeptide reads, in one-letter code: Pyrophosphate-energized proton pump 2 (208 aa).

5 consecutive transmembrane segments (helical) span residues alanine 19–valine 39, glycine 54–isoleucine 74, glycine 89–isoleucine 109, leucine 140–alanine 160, and leucine 167–leucine 187.

It belongs to the H(+)-translocating pyrophosphatase (TC 3.A.10) family. Homodimer. Mg(2+) is required as a cofactor.

The protein resides in the cell inner membrane. It carries out the reaction diphosphate + H2O + H(+)(in) = 2 phosphate + 2 H(+)(out). Its function is as follows. Proton pump that utilizes the energy of pyrophosphate hydrolysis as the driving force for proton movement across the membrane. Generates a proton motive force. This chain is Pyrophosphate-energized proton pump 2 (hppA2), found in Mycoplana dimorpha.